The primary structure comprises 210 residues: High frequency lysogenization protein HflD homolog (210 aa).

A coiled-coil region spans residues 103–130; the sequence is EAKAKLAERLQQIERQLPLYENDIMADQ.

This sequence belongs to the HflD family.

The protein localises to the cytoplasm. The protein resides in the cell inner membrane. The polypeptide is High frequency lysogenization protein HflD homolog (Actinobacillus pleuropneumoniae serotype 5b (strain L20)).